The sequence spans 839 residues: MMSASRLAGTLIPAMAFLSCVRPESWEPCVEVVPNITYQCMELNFYKIPDNLPFSTKNLDLSFNPLRHLGSYSFFSFPELQVLDLSRCEIQTIEDGAYQSLSHLSTLILTGNPIQSLALGAFSGLSSLQKLVAVETNLASLENFPIGHLKTLKELNVAHNLIQSFKLPEYFSNLTNLEHLDLSSNKIQSIYCTDLRVLHQMPLLNLSLDLSLNPMNFIQPGAFKEIRLHKLTLRNNFDSLNVMKTCIQGLAGLEVHRLVLGEFRNEGNLEKFDKSALEGLCNLTIEEFRLAYLDYYLDDIIDLFNCLTNVSSFSLVSVTIERVKDFSYNFGWQHLELVNCKFGQFPTLKLKSLKRLTFTSNKGGNAFSEVDLPSLEFLDLSRNGLSFKGCCSQSDFGTTSLKYLDLSFNGVITMSSNFLGLEQLEHLDFQHSNLKQMSEFSVFLSLRNLIYLDISHTHTRVAFNGIFNGLSSLEVLKMAGNSFQENFLPDIFTELRNLTFLDLSQCQLEQLSPTAFNSLSSLQVLNMSHNNFFSLDTFPYKCLNSLQVLDYSLNHIMTSKKQELQHFPSSLAFLNLTQNDFACTCEHQSFLQWIKDQRQLLVEVERMECATPSDKQGMPVLSLNITCQMNKTIIGVSVLSVLVVSVVAVLVYKFYFHLMLLAGCIKYGRGENIYDAFVIYSSQDEDWVRNELVKNLEEGVPPFQLCLHYRDFIPGVAIAANIIHEGFHKSRKVIVVVSQHFIQSRWCIFEYEIAQTWQFLSSRAGIIFIVLQKVEKTLLRQQVELYRLLSRNTYLEWEDSVLGRHIFWRRLRKALLDGKSWNPEGTVGTGCNWQEATSI.

Residues 1 to 23 (MMSASRLAGTLIPAMAFLSCVRP) form the signal peptide. Over 24 to 631 (ESWEPCVEVV…SLNITCQMNK (608 aa)) the chain is Extracellular. C29 and C40 are joined by a disulfide. The N-linked (GlcNAc...) asparagine glycan is linked to N35. 5 LRR repeats span residues 55-76 (STKN…SFFS), 79-100 (ELQV…AYQS), 103-124 (HLST…AFSG), 127-148 (SLQK…PIGH), and 151-172 (TLKE…EYFS). The N-linked (GlcNAc...) asparagine glycan is linked to N173. LRR repeat units lie at residues 176 to 199 (NLEH…RVLH), 205 to 225 (NLSL…AFKE), and 227 to 247 (RLHK…KTCI). An N-linked (GlcNAc...) asparagine glycan is attached at N205. C281 and C306 are oxidised to a cystine. N-linked (GlcNAc...) asparagine glycans are attached at residues N282 and N309. LRR repeat units lie at residues 331 to 351 (GWQH…LKLK), 352 to 373 (SLKR…VDLP), 374 to 394 (SLEF…CSQS), 400 to 422 (SLKY…LGLE), 423 to 444 (QLEH…SVFL), 448 to 456 (NLIYLDISH), 472 to 495 (SLEV…FTEL), 497 to 518 (NLTF…AFNS), 521 to 542 (SLQV…PYKC), and 545 to 565 (SLQV…QELQ). A disulfide bridge links C390 with C391. N-linked (GlcNAc...) asparagine glycosylation is found at N497 and N526. N575 is a glycosylation site (N-linked (GlcNAc...) asparagine). Positions 579-629 (NDFACTCEHQSFLQWIKDQRQLLVEVERMECATPSDKQGMPVLSLNITCQM) constitute an LRRCT domain. 2 cysteine pairs are disulfide-bonded: C583–C609 and C585–C627. 2 N-linked (GlcNAc...) asparagine glycosylation sites follow: N624 and N630. Residues 632-652 (TIIGVSVLSVLVVSVVAVLVY) form a helical membrane-spanning segment. The Cytoplasmic segment spans residues 653–839 (KFYFHLMLLA…GCNWQEATSI (187 aa)). The TIR domain occupies 672–815 (NIYDAFVIYS…IFWRRLRKAL (144 aa)).

Belongs to the Toll-like receptor family. As to quaternary structure, belongs to the lipopolysaccharide (LPS) receptor, a multi-protein complex containing at least CD14, LY96 and TLR4. Binding to bacterial LPS leads to homodimerization. Interacts with LY96 via the extracellular domain. Interacts with MYD88. Interacts (via TIR domains) with TIRAP. Interacts with TICAM2. Interacts with NOX4. Interacts with CNPY3. Interacts with HSP90B1. The interaction with both CNPY3 and HSP90B1 is required for proper folding in the endoplasmic reticulum. Interacts with MAP3K21; this interaction leads to negative regulation of TLR4 signaling. Interacts with CD36, following CD36 stimulation by oxLDL or amyloid-beta 42, and forms a heterodimer with TLR6. The trimeric complex is internalized and triggers inflammatory response. LYN kinase activity facilitates TLR4-TLR6 heterodimerization and signal initiation. Interacts with TICAM1 in response to LPS in a WDFY1-dependent manner. Interacts with WDFY1 in response to LPS. Interacts with SMPDL3B. Interacts with CEACAM1; upon lipopolysaccharide stimulation, forms a complex including TLR4 and the phosphorylated form of SYK and CEACAM1, which in turn, recruits PTPN6 that dephosphorylates SYK, reducing the production of reactive oxygen species (ROS) and lysosome disruption, which in turn, reduces the activity of the inflammasome. Interacts with RFTN1; the interaction occurs in response to lipopolysaccharide stimulation. Interacts with SCIMP; the interaction occurs in response to lipopolysaccharide stimulation and is enhanced by phosphorylation of SCIMP by LYN. This interaction facilitates the phosphorylation of TLR4 by LYN which elicits a selective cytokine response in macrophages. Interacts with TRAF3IP3. Interacts with TREM1; this interaction enhances TLR4-mediated inflammatory response. Interacts with ZG16B/PAUF. Interacts with CD82; this interaction inhibits TLR4-mediated signaling pathway. Interacts with neutrophil recruitment protein from Aedes aegypti saliva; the interaction probably promotes activation of canonical NF-kappa-B signaling in skin-resident macrophages and subsequent expression of neutrophil chemoattractants. (Microbial infection) In case of infection, interacts with uropathogenic E.coli protein TcpC. In terms of assembly, (Microbial infection) In case of infection, interacts with B.melitensis protein TcpB; TcpB abolishes the TLR4-TIRAP interaction in vitro. As to quaternary structure, (Microbial infection) Interacts with ebolavirus protein GP; this interaction leads to the production of proinflammatory cytokines and suppressor of cytokine signaling 1/SOCS1. N-Glycosylation of Asn-526 and Asn-575 by STT3A-containing OST-A complex is necessary for the expression of TLR4 on the cell surface and the LPS-response. Likewise, mutants lacking two or more of the other N-glycosylation sites were deficient in interaction with LPS. In terms of processing, phosphorylated on tyrosine residues by LYN after binding lipopolysaccharide. Post-translationally, ubiquitinated by RNF128 via 'Lys-28'-linked polyubiquitin chains, leading to proteasomal degradation. As to expression, highly expressed in placenta, spleen and peripheral blood leukocytes. Detected in monocytes, macrophages, dendritic cells and several types of T-cells. Expressed in pancreatic cancer cells but not in normal pancreatic cells (at protein level).

The protein localises to the cell membrane. The protein resides in the early endosome. It is found in the cell projection. Its subcellular location is the ruffle. Transmembrane receptor that functions as a pattern recognition receptor recognizing pathogen- and damage-associated molecular patterns (PAMPs and DAMPs) to induce innate immune responses via downstream signaling pathways. At the plasma membrane, cooperates with LY96 to mediate the innate immune response to bacterial lipopolysaccharide (LPS). Also involved in LPS-independent inflammatory responses triggered by free fatty acids, such as palmitate, and Ni(2+). Mechanistically, acts via MYD88, TIRAP and TRAF6, leading to NF-kappa-B activation, cytokine secretion and the inflammatory response. Alternatively, CD14-mediated TLR4 internalization via endocytosis is associated with the initiation of a MYD88-independent signaling via the TICAM1-TBK1-IRF3 axis leading to type I interferon production. In addition to the secretion of proinflammatory cytokines, initiates the activation of NLRP3 inflammasome and formation of a positive feedback loop between autophagy and NF-kappa-B signaling cascade. In complex with TLR6, promotes inflammation in monocytes/macrophages by associating with TLR6 and the receptor CD86. Upon ligand binding, such as oxLDL or amyloid-beta 42, the TLR4:TLR6 complex is internalized and triggers inflammatory response, leading to NF-kappa-B-dependent production of CXCL1, CXCL2 and CCL9 cytokines, via MYD88 signaling pathway, and CCL5 cytokine, via TICAM1 signaling pathway. In myeloid dendritic cells, vesicular stomatitis virus glycoprotein G but not LPS promotes the activation of IRF7, leading to type I IFN production in a CD14-dependent manner. Required for the migration-promoting effects of ZG16B/PAUF on pancreatic cancer cells. The polypeptide is Toll-like receptor 4 (TLR4) (Homo sapiens (Human)).